A 237-amino-acid polypeptide reads, in one-letter code: MLEWRDEGALLSVRRHGESAAIIEVFTASHGRHLGVVRGGASRRHAPVLQPGAQLDLTWKARLDDHMGAFTVEPLRARTGIFGDRLALAGLNAICAMLHVVLPEREPHVGLWRESIELMDALAAPGWPAAYLRWEMRLLEEAGFGLDLTRCAVTGSREDLAFVSPRTGRAVGRAAAGDWADRLFPLPLALLGQGPASGPEVRQGLAITGHFLARELPLAGRPLPEARARLIDLLARG.

The protein belongs to the RecO family.

In terms of biological role, involved in DNA repair and RecF pathway recombination. The sequence is that of DNA repair protein RecO from Cereibacter sphaeroides (strain ATCC 17025 / ATH 2.4.3) (Rhodobacter sphaeroides).